A 40-amino-acid polypeptide reads, in one-letter code: Thioredoxin (40 aa).

A disulfide bond links C29 and C32.

This sequence belongs to the thioredoxin family.

Functionally, participates in various redox reactions through the reversible oxidation of its active center dithiol to a disulfide and catalyzes dithiol-disulfide exchange reactions. The chain is Thioredoxin (trxA) from Clostridium sporogenes.